A 593-amino-acid chain; its full sequence is AT-rich interactive domain-containing protein 3A (593 aa).

The tract at residues 14–222 (QQRARQELEA…PQLQPPDHGD (209 aa)) is disordered. The span at 41-53 (AAPDEDREPESAR) shows a compositional bias: basic and acidic residues. The span at 54–87 (MQRAQMAALAAMRAAAAGLGHPASPGGSEDGPPG) shows a compositional bias: low complexity. Ser77, Ser81, and Ser88 each carry phosphoserine. Thr98 carries the phosphothreonine modification. Ser101 and Ser119 each carry phosphoserine. Over residues 104-127 (RGREGPGEEHFEDMASDEDMKPKW) the composition is skewed to basic and acidic residues. The tract at residues 119–156 (SDEDMKPKWEEEEMEEDLGEDEEEEEEDYEDEEEEEDE) is acidic. A compositionally biased stretch (acidic residues) spans 128 to 158 (EEEEMEEDLGEDEEEEEEDYEDEEEEEDEEG). Residues 238–330 (DPKRKEFLDD…YLYPYECEKR (93 aa)) form the ARID domain. Phosphoserine is present on residues Ser353 and Ser362. Residues Lys398, Lys399, Lys452, and Lys462 each participate in a glycyl lysine isopeptide (Lys-Gly) (interchain with G-Cter in SUMO2) cross-link. In terms of domain architecture, REKLES spans 444–541 (AALEQLREKL…GVLFAQPPAP (98 aa)). Residues 445-488 (ALEQLREKLESAEPPEKKMALVADEQQRLMQRALQQNFLAMAAQ) form an important for nuclear localization region. Positions 490–513 (PMSIRINSQASESRQDSAVNLTGT) are homodimerization. Disordered regions lie at residues 497–516 (SQAS…TNGS) and 539–593 (PAPT…NSLP). Residues 537-557 (QPPAPTPTSAPNKGGGGGGGS) form an important for cytoplasmic localization region. Residues 549–576 (KGGGGGGGSSSNAGGRGGNTGTSGGQAG) show a composition bias toward gly residues. Over residues 580–593 (LSTPSTSTSNNSLP) the composition is skewed to low complexity.

Homodimer. Heterodimer with ARID3B. Interacts with E2F1. Interacts with GTF2I and BTK. Widely expressed, with highest expression in skeletal muscle, thalamus, and colon.

Its subcellular location is the nucleus. The protein resides in the cytoplasm. In terms of biological role, transcription factor which may be involved in the control of cell cycle progression by the RB1/E2F1 pathway and in B-cell differentiation. The chain is AT-rich interactive domain-containing protein 3A (ARID3A) from Homo sapiens (Human).